Consider the following 312-residue polypeptide: 2,3-dihydroxyphenylpropionate/2,3-dihydroxicinnamic acid 1,2-dioxygenase (312 aa).

His115 acts as the Proton donor in catalysis. The active-site Proton acceptor is the His179.

This sequence belongs to the LigB/MhpB extradiol dioxygenase family. In terms of assembly, homotetramer. Requires Fe(2+) as cofactor.

It carries out the reaction 3-(2,3-dihydroxyphenyl)propanoate + O2 = (2Z,4E)-2-hydroxy-6-oxonona-2,4-dienedioate + H(+). The catalysed reaction is (2E)-3-(2,3-dihydroxyphenyl)prop-2-enoate + O2 = (2Z,4E,7E)-2-hydroxy-6-oxonona-2,4,7-trienedioate + H(+). The protein operates within aromatic compound metabolism; 3-phenylpropanoate degradation. Functionally, catalyzes the non-heme iron(II)-dependent oxidative cleavage of 2,3-dihydroxyphenylpropionic acid and 2,3-dihydroxicinnamic acid into 2-hydroxy-6-ketononadienedioate and 2-hydroxy-6-ketononatrienedioate, respectively. In Azotobacter vinelandii (strain DJ / ATCC BAA-1303), this protein is 2,3-dihydroxyphenylpropionate/2,3-dihydroxicinnamic acid 1,2-dioxygenase.